The following is a 932-amino-acid chain: Protocadherin gamma-A7 (932 aa).

An N-terminal signal peptide occupies residues 1-28; the sequence is MAAQPRGGDYRGFFLLSILLGTPWEAWA. Cadherin domains lie at 29-133, 134-242, 243-347, 348-452, 453-562, and 570-682; these read GRIL…VPRF, LTEE…TPVF, SLPQ…APEV, TMTS…PPTF, PHSS…PPEI, and DGST…EPSD. The Extracellular portion of the chain corresponds to 29–692; the sequence is GRILYSVSEE…GPYNYDLTLY (664 aa). Residues Asn419 and Asn545 are each glycosylated (N-linked (GlcNAc...) asparagine). Residues 693-713 traverse the membrane as a helical segment; that stretch reads LVVAVATVSCVFLAFVLVLLA. The Cytoplasmic portion of the chain corresponds to 714 to 932; it reads LRLRRWHKSR…KKKSGKKEKK (219 aa). Disordered stretches follow at residues 805-841 and 902-932; these read PSIQ…WPNN and ATLT…KEKK. The span at 922-932 shows a compositional bias: basic residues; sequence NKKKSGKKEKK.

It localises to the cell membrane. In terms of biological role, potential calcium-dependent cell-adhesion protein. May be involved in the establishment and maintenance of specific neuronal connections in the brain. This is Protocadherin gamma-A7 (PCDHGA7) from Homo sapiens (Human).